Reading from the N-terminus, the 397-residue chain is MGCIKVISVFLAAIAAVDARAFFHNRGGNDVIPNSYIVVMKDGVTAEDFDSHISSVAATHSLNKAKRGSETVGHKDSFNINGWRAYNGHFDEATIESILKDDKVNYVEHDRVVKLAALTTQPNAPTWGLGRVSHKAPGNKDFVYDSSAGQGITIYGVDTGIDIRHPEFAGRIRWGTNTVDNDNTDGNGHGTHTAGTFAGTTYGVAKKANIVAVKVLSAGGSGSTSGVIKGIDWCVTDARSKNALGKAALNLSLGGSFSQASNDAVTRAQEAGIFVAVAAGNDNRDAKNSSPASAPAVCTAASSTIDDQKSSFSNWGTIVDIYAPGSNILSAAPGGGTRTLSGTSMASPHVCGVGAAMLAQGVSVAQACDRLKQIGNAVIRNPGTGTTNRLLYNGSGR.

Positions 1–19 (MGCIKVISVFLAAIAAVDA) are cleaved as a signal peptide. Positions 20–116 (RAFFHNRGGN…VEHDRVVKLA (97 aa)) are excised as a propeptide. In terms of domain architecture, Inhibitor I9 spans 35–116 (SYIVVMKDGV…VEHDRVVKLA (82 aa)). The Peptidase S8 domain maps to 126-397 (TWGLGRVSHK…NRLLYNGSGR (272 aa)). Active-site charge relay system residues include Asp-158 and His-189. Residue Asn-250 is glycosylated (N-linked (GlcNAc...) asparagine). Ser-344 serves as the catalytic Charge relay system. Asn-393 is a glycosylation site (N-linked (GlcNAc...) asparagine).

This sequence belongs to the peptidase S8 family.

The protein localises to the secreted. Functionally, secreted subtilisin-like serine protease with keratinolytic activity that contributes to pathogenicity. The sequence is that of Subtilisin-like protease 3 (SUB3) from Arthroderma benhamiae (strain ATCC MYA-4681 / CBS 112371) (Trichophyton mentagrophytes).